Here is a 157-residue protein sequence, read N- to C-terminus: MAEEQAAAQEQQPAFGIEKVYVKDLSLEIPHAPQIFIQREAPQVSIELSNATAQLEEGIYEVVVTVTVTSKIADKTVFLVEVAQAGIFQIRNVPQENIDIILGVTCPNIIFPYARETISDVVTRAGFPPVLLNPVNFEALYAQQKQEQAKANGATTH.

It belongs to the SecB family. As to quaternary structure, homotetramer, a dimer of dimers. One homotetramer interacts with 1 SecA dimer.

Its subcellular location is the cytoplasm. One of the proteins required for the normal export of preproteins out of the cell cytoplasm. It is a molecular chaperone that binds to a subset of precursor proteins, maintaining them in a translocation-competent state. It also specifically binds to its receptor SecA. The sequence is that of Protein-export protein SecB from Methylobacillus flagellatus (strain ATCC 51484 / DSM 6875 / VKM B-1610 / KT).